The primary structure comprises 204 residues: Thymidylate kinase (204 aa).

Gly-11 to Thr-18 is an ATP binding site.

It belongs to the thymidylate kinase family.

The enzyme catalyses dTMP + ATP = dTDP + ADP. The protein operates within pyrimidine metabolism; dTTP biosynthesis. The protein is Thymidylate kinase (TMK) of Cowpox virus (strain GRI-90 / Grishak) (CPV).